Here is a 325-residue protein sequence, read N- to C-terminus: uncharacterized protein (325 aa).

The helical transmembrane segment at 67 to 87 threads the bilayer; it reads WIPFFLLFSSVVVLGGLWWLG.

It localises to the membrane. This is an uncharacterized protein from Synechocystis sp. (strain ATCC 27184 / PCC 6803 / Kazusa).